We begin with the raw amino-acid sequence, 529 residues long: Bifunctional purine biosynthesis protein PurH (529 aa).

The 148-residue stretch at 1–148 (MQQRRPIRRA…KNHKDVAIVV (148 aa)) folds into the MGS-like domain.

Belongs to the PurH family.

The enzyme catalyses (6R)-10-formyltetrahydrofolate + 5-amino-1-(5-phospho-beta-D-ribosyl)imidazole-4-carboxamide = 5-formamido-1-(5-phospho-D-ribosyl)imidazole-4-carboxamide + (6S)-5,6,7,8-tetrahydrofolate. It carries out the reaction IMP + H2O = 5-formamido-1-(5-phospho-D-ribosyl)imidazole-4-carboxamide. It participates in purine metabolism; IMP biosynthesis via de novo pathway; 5-formamido-1-(5-phospho-D-ribosyl)imidazole-4-carboxamide from 5-amino-1-(5-phospho-D-ribosyl)imidazole-4-carboxamide (10-formyl THF route): step 1/1. The protein operates within purine metabolism; IMP biosynthesis via de novo pathway; IMP from 5-formamido-1-(5-phospho-D-ribosyl)imidazole-4-carboxamide: step 1/1. The polypeptide is Bifunctional purine biosynthesis protein PurH (Yersinia pseudotuberculosis serotype IB (strain PB1/+)).